Reading from the N-terminus, the 240-residue chain is DNA repair protein RecO (240 aa).

Belongs to the RecO family.

Involved in DNA repair and RecF pathway recombination. The polypeptide is DNA repair protein RecO (Actinobacillus pleuropneumoniae serotype 5b (strain L20)).